The primary structure comprises 92 residues: Defensin-like protein 249 (92 aa).

An N-terminal signal peptide occupies residues 1-24 (MKLAAIFLASSVLLSLLPIHLSQG). Intrachain disulfides connect cysteine 34/cysteine 91, cysteine 45/cysteine 74, cysteine 53/cysteine 84, and cysteine 72/cysteine 86.

It belongs to the DEFL family.

It is found in the secreted. In Arabidopsis thaliana (Mouse-ear cress), this protein is Defensin-like protein 249 (SCRL7).